The primary structure comprises 109 residues: Latartoxin-2a (109 aa).

A signal peptide spans 1 to 19; the sequence is MKVLVIIALCLVAFQSALS. A propeptide spans 20-37 (removed in mature form); it reads KKIENFESYIEDLKSEAR. A Processing quadruplet motif motif is present at residues 34 to 37; that stretch reads SEAR. 5 cysteine pairs are disulfide-bonded: Cys39-Cys56, Cys46-Cys67, Cys55-Cys81, Cys69-Cys79, and Cys72-Cys93. Val108 is modified (valine amide).

The protein belongs to the neurotoxin 19 (CSTX) family. 11 (latartoxin) subfamily. In terms of processing, contains 5 disulfide bonds. Cleavage of the propeptide depends on the processing quadruplet motif (XXXR, with at least one of X being E). As to expression, expressed by the venom gland.

The protein localises to the secreted. Insect toxin. Causes paralysis in larvae of C.vicina by depolarizing membranes at the neuromuscular junction. This Lachesana tarabaevi (Spider) protein is Latartoxin-2a.